A 753-amino-acid polypeptide reads, in one-letter code: 5-methyltetrahydropteroyltriglutamate--homocysteine methyltransferase (753 aa).

5-methyltetrahydropteroyltri-L-glutamate-binding positions include 17–20 and Lys-117; that span reads RELK. L-homocysteine is bound by residues 431-433 and Glu-484; that span reads IGS. L-methionine is bound by residues 431–433 and Glu-484; that span reads IGS. 5-methyltetrahydropteroyltri-L-glutamate contacts are provided by residues 515-516 and Trp-561; that span reads RC. Asp-599 lines the L-homocysteine pocket. Asp-599 contributes to the L-methionine binding site. Position 605 (Glu-605) interacts with 5-methyltetrahydropteroyltri-L-glutamate. Positions 641, 643, and 665 each coordinate Zn(2+). The Proton donor role is filled by His-694. Cys-726 provides a ligand contact to Zn(2+).

It belongs to the vitamin-B12 independent methionine synthase family. Zn(2+) serves as cofactor.

It carries out the reaction 5-methyltetrahydropteroyltri-L-glutamate + L-homocysteine = tetrahydropteroyltri-L-glutamate + L-methionine. It participates in amino-acid biosynthesis; L-methionine biosynthesis via de novo pathway; L-methionine from L-homocysteine (MetE route): step 1/1. Its function is as follows. Catalyzes the transfer of a methyl group from 5-methyltetrahydrofolate to homocysteine resulting in methionine formation. This is 5-methyltetrahydropteroyltriglutamate--homocysteine methyltransferase from Escherichia fergusonii (strain ATCC 35469 / DSM 13698 / CCUG 18766 / IAM 14443 / JCM 21226 / LMG 7866 / NBRC 102419 / NCTC 12128 / CDC 0568-73).